The following is a 314-amino-acid chain: tRNA pseudouridine synthase B (314 aa).

Histidine 43 lines the substrate pocket. The active-site Nucleophile is aspartate 48. Substrate contacts are provided by tyrosine 76, tyrosine 179, and leucine 200.

It belongs to the pseudouridine synthase TruB family. Type 1 subfamily.

The catalysed reaction is uridine(55) in tRNA = pseudouridine(55) in tRNA. Responsible for synthesis of pseudouridine from uracil-55 in the psi GC loop of transfer RNAs. This is tRNA pseudouridine synthase B from Salmonella typhi.